The chain runs to 138 residues: Secreted RxLR effector protein 91 (138 aa).

An N-terminal signal peptide occupies residues 1-18 (MVIPHIICLPMALHLWTC). The RxLR motif lies at 34 to 37 (RRLR). N-linked (GlcNAc...) asparagine glycosylation occurs at asparagine 93.

This sequence belongs to the RxLR effector family.

It localises to the secreted. The protein localises to the host nucleus. Secreted effector that completely suppresses the host cell death induced by cell death-inducing proteins. The protein is Secreted RxLR effector protein 91 of Plasmopara viticola (Downy mildew of grapevine).